A 303-amino-acid polypeptide reads, in one-letter code: Cytidine deaminase (303 aa).

CMP/dCMP-type deaminase domains are found at residues Thr-57–Asp-172 and Ile-196–Ser-303. Asn-98–Glu-100 serves as a coordination point for substrate. His-111 provides a ligand contact to Zn(2+). The active-site Proton donor is the Glu-113. Zn(2+) contacts are provided by Cys-138 and Cys-141.

Belongs to the cytidine and deoxycytidylate deaminase family. Homodimer. Zn(2+) serves as cofactor.

It catalyses the reaction cytidine + H2O + H(+) = uridine + NH4(+). The catalysed reaction is 2'-deoxycytidine + H2O + H(+) = 2'-deoxyuridine + NH4(+). Its function is as follows. This enzyme scavenges exogenous and endogenous cytidine and 2'-deoxycytidine for UMP synthesis. The polypeptide is Cytidine deaminase (Histophilus somni (strain 2336) (Haemophilus somnus)).